The sequence spans 1008 residues: PWWP domain-containing protein 3 (1008 aa).

A coiled-coil region spans residues 78-122 (VSSLLKLKEDVEEEEEEEEEEEEEEEDGEDEEEEEEEEEEEEEEE). Residues 84–124 (LKEDVEEEEEEEEEEEEEEEDGEDEEEEEEEEEEEEEEEHG) are disordered. The segment covering 87–122 (DVEEEEEEEEEEEEEEEDGEDEEEEEEEEEEEEEEE) has biased composition (acidic residues). The PWWP domain maps to 127-188 (VGDFVWGKIK…ASQLKPFAES (62 aa)). Disordered stretches follow at residues 307 to 339 (EYHEPQSVPGLEDKNNDDDDDDEEKNVNDGLQW), 399 to 606 (ETEP…LGQE), and 668 to 874 (NHKF…GPGS). A compositionally biased stretch (acidic residues) spans 321–330 (NNDDDDDDEE). Over residues 399-409 (ETEPADGDVKS) the composition is skewed to basic and acidic residues. The span at 473 to 490 (DDGDDDGSGDKEESEEKE) shows a compositional bias: acidic residues. Composition is skewed to basic and acidic residues over residues 511–522 (RFDDSVVERSTE), 677–687 (SSDKEKEELSE), and 707–725 (QKAEEIEVTGKEENETDKH). Residues 726-738 (GKMKKERKRKKSE) are compositionally biased toward basic residues. Basic and acidic residues-rich tracts occupy residues 739-758 (SKKEGGEGEETQKEANESTK), 768-787 (SKKQSDGEEETQKEPSESTK), and 794-818 (NPESKKKAEAVEEEETRKESVESTK). Short sequence motifs (nuclear localization signal) lie at residues 786–793 (TKKERKRK), 809–816 (TRKESVES), and 841–848 (EKKKKKKR). Residues 804 to 824 (VEEEETRKESVESTKKERKRK) adopt a coiled-coil conformation. Over residues 842 to 854 (KKKKKKREGKSKK) the composition is skewed to basic residues.

Belongs to the PDP family. Interacts with DEK3. Binds to LHP1, MSI4/FVE and MSI5. Component of the PRC2 (polycomb repressive complex 2) complex which regulates histone methylation on histone H3K27.

Its subcellular location is the nucleus. Together with PDP1, PDP2 and PDP6, interacts with MSI4/FVE and MSI5 to suppress FLC, MAF4 and MAF5 expression by regulating the function of the PRC2 complex and modulating H3K27me3 level, thereby promoting flowering. In Arabidopsis thaliana (Mouse-ear cress), this protein is PWWP domain-containing protein 3.